We begin with the raw amino-acid sequence, 322 residues long: Tetraacyldisaccharide 4'-kinase (322 aa).

54–61 contacts ATP; the sequence is SVGGTGKT.

The protein belongs to the LpxK family.

It catalyses the reaction a lipid A disaccharide + ATP = a lipid IVA + ADP + H(+). Its pathway is glycolipid biosynthesis; lipid IV(A) biosynthesis; lipid IV(A) from (3R)-3-hydroxytetradecanoyl-[acyl-carrier-protein] and UDP-N-acetyl-alpha-D-glucosamine: step 6/6. Its function is as follows. Transfers the gamma-phosphate of ATP to the 4'-position of a tetraacyldisaccharide 1-phosphate intermediate (termed DS-1-P) to form tetraacyldisaccharide 1,4'-bis-phosphate (lipid IVA). The sequence is that of Tetraacyldisaccharide 4'-kinase from Francisella tularensis subsp. tularensis (strain FSC 198).